Reading from the N-terminus, the 578-residue chain is MDIQRSILIVALAVVSYLLVLQWNKDYGQPELPAASASMNTTQGLPDTPSASGTSSDVPTAQSSAAGSEAADKPVAVSDKLIQVKTDVLDLAIDPRGGDIVQLGLLQYPRRLDRPDVPFPLFDNGRERTYLAQSGLTGADGPDASSAGRPLFRSAQSSYQLADGQNELVVDLSFSHDGVNYIKRFTFHRGLKADCSDKEKAQKKIECINENAYQVGVSYLIDNQSGKTWSGNLFAQLKRDGSADPSSTTATGVSTYLGAAVWTPDSPYKKISTKDMDKEQFKESVQGGWVAWLQHYFVTAWVPTKGEQHQVMTRKDGQGNYIVGFTGPTLSVPAGSKVETDLTLYAGPKLQKHLKELSPGLELTVDYGFLWFIAQPIFWLLQHIHSLIGNWGWSIIALTVLIKLAFFPLSAASYRSMARMRAVSPKMQAIKEQHGDDRQKMSQAMMELYKKEKINPLGGCLPILVQMPVFLSLYWVLLESVEMRQAPWLGWITDLSVKDPFFILPIVMGGTMLIQQMLNPTPPDPMQAKVMKLMPIIFTFFFLWFPAGLVLYWVVNNCLSIAQQWYITRKIEAAAKTA.

A helical membrane pass occupies residues 3 to 23; sequence IQRSILIVALAVVSYLLVLQW. Residues 34 to 72 are disordered; that stretch reads AASASMNTTQGLPDTPSASGTSSDVPTAQSSAAGSEAAD. Polar residues predominate over residues 37–66; it reads ASMNTTQGLPDTPSASGTSSDVPTAQSSAA. A run of 5 helical transmembrane segments spans residues 361–381, 387–407, 457–477, 500–520, and 535–555; these read LELTVDYGFLWFIAQPIFWLL, LIGNWGWSIIALTVLIKLAFF, LGGCLPILVQMPVFLSLYWVL, PFFILPIVMGGTMLIQQMLNP, and PIIFTFFFLWFPAGLVLYWVV.

The protein belongs to the OXA1/ALB3/YidC family. Type 1 subfamily. Interacts with the Sec translocase complex via SecD. Specifically interacts with transmembrane segments of nascent integral membrane proteins during membrane integration.

The protein resides in the cell inner membrane. Functionally, required for the insertion and/or proper folding and/or complex formation of integral membrane proteins into the membrane. Involved in integration of membrane proteins that insert both dependently and independently of the Sec translocase complex, as well as at least some lipoproteins. Aids folding of multispanning membrane proteins. The polypeptide is Membrane protein insertase YidC (Pseudomonas aeruginosa (strain ATCC 15692 / DSM 22644 / CIP 104116 / JCM 14847 / LMG 12228 / 1C / PRS 101 / PAO1)).